The following is a 416-amino-acid chain: UPF0761 membrane protein Mpe_A1422 (416 aa).

The next 6 membrane-spanning stretches (helical) occupy residues 63 to 83 (IALV…PMFG), 120 to 140 (LGTV…LTID), 159 to 179 (VLVY…SLTL), 198 to 218 (LSVL…AGLF), 234 to 256 (GGLF…LAQV), and 271 to 291 (IFLI…VIAA).

This sequence belongs to the UPF0761 family.

The protein resides in the cell inner membrane. The sequence is that of UPF0761 membrane protein Mpe_A1422 from Methylibium petroleiphilum (strain ATCC BAA-1232 / LMG 22953 / PM1).